Consider the following 108-residue polypeptide: Movement protein TGB2 (108 aa).

Residues 1–14 lie on the Cytoplasmic side of the membrane; it reads MPLTPPPDHSITYR. A helical transmembrane segment spans residues 15–31; that stretch reads ILAVGLCSCCAIYAATR. At 32–67 the chain is on the lumenal side; it reads STLPHTGDNLHSLPYGGKYSDGTKSICYSGPGPTPD. Residues 68–85 traverse the membrane as a helical segment; the sequence is IPTHLPALLVLVLVVAIY. The Cytoplasmic portion of the chain corresponds to 86-108; that stretch reads ASSRLDFSVNYRCSCRVHNRSGQ.

The protein belongs to the Tymovirales TGBp2 protein family.

The protein resides in the host endoplasmic reticulum membrane. Plays a role in viral cell-to-cell propagation, by facilitating genome transport to neighboring plant cells through plasmosdesmata,. The sequence is that of Movement protein TGB2 from Strawberry mild yellow edge-associated virus (SMYEaV).